The sequence spans 218 residues: uncharacterized protein (218 aa).

One can recognise an ACT domain in the interval 4–83 (GISIEAENKV…IHSSLKKIYG (80 aa)).

This is an uncharacterized protein from Methanocaldococcus jannaschii (strain ATCC 43067 / DSM 2661 / JAL-1 / JCM 10045 / NBRC 100440) (Methanococcus jannaschii).